The primary structure comprises 623 residues: Chaperone protein HtpG (623 aa).

Residues 1-341 (MEKREFKAES…SQDLSLNISR (341 aa)) are a; substrate-binding. The interval 342–549 (EMLQHDRQLS…EGEVSIEMEK (208 aa)) is b. The interval 550–623 (ILSAMPNNQG…FTNDICKLMK (74 aa)) is c.

It belongs to the heat shock protein 90 family. As to quaternary structure, homodimer.

It is found in the cytoplasm. Its function is as follows. Molecular chaperone. Has ATPase activity. The protein is Chaperone protein HtpG of Clostridium perfringens (strain 13 / Type A).